A 269-amino-acid polypeptide reads, in one-letter code: Indole-3-glycerol phosphate synthase (269 aa).

The protein belongs to the TrpC family.

It carries out the reaction 1-(2-carboxyphenylamino)-1-deoxy-D-ribulose 5-phosphate + H(+) = (1S,2R)-1-C-(indol-3-yl)glycerol 3-phosphate + CO2 + H2O. It functions in the pathway amino-acid biosynthesis; L-tryptophan biosynthesis; L-tryptophan from chorismate: step 4/5. The protein is Indole-3-glycerol phosphate synthase of Roseiflexus sp. (strain RS-1).